The primary structure comprises 532 residues: Ankyrin repeat-containing protein At2g01680 (532 aa).

ANK repeat units lie at residues 9-38 (LTHQ…GDEL), 58-89 (AGET…TVKI), 93-122 (SDMN…ELCR), 127-156 (SNTS…SCAM), 161-190 (NGKT…AIVG), 195-224 (KGQT…TILN), and 229-259 (KGNT…EVNA). 4 helical membrane-spanning segments follow: residues 354–374 (ITVV…NLPG), 396–416 (VFCL…VVQI), 436–456 (LMWA…FAVV), and 467–487 (ITLL…YFVF).

It is found in the membrane. This Arabidopsis thaliana (Mouse-ear cress) protein is Ankyrin repeat-containing protein At2g01680.